The primary structure comprises 347 residues: Haptoglobin (347 aa).

The N-terminal stretch at 1–18 is a signal peptide; sequence MSDLGAVVALLLWGQLFA. Residues 31-88 enclose the Sushi domain; it reads DGCPKPPMIANGYVEHLVRYQCKNYYRLRTEGDGVYTLNNEKQWTNKAVGDKLPECEA. 2 disulfides stabilise this stretch: Cys52–Cys86 and Cys90–Cys207. The tract at residues 103–347 is serine protease; the sequence is ILGGHLDAKG…DWVQKTIAEN (245 aa). N-linked (GlcNAc...) asparagine glycans are attached at residues Asn125, Asn148, Asn152, Asn182, and Asn232. Cystine bridges form between Cys250–Cys281 and Cys292–Cys322. The interval 259 to 264 is interaction with CD163; sequence VPEKKT.

The protein belongs to the peptidase S1 family. Tetramer of two alpha and two beta chains; disulfide-linked. The hemoglobin/haptoglobin complex is composed of a haptoglobin dimer bound to two hemoglobin alpha-beta dimers. Interacts with CD163. Interacts with ERGIC3. In terms of tissue distribution, expressed by the liver and secreted in plasma.

The protein localises to the secreted. Its function is as follows. As a result of hemolysis, hemoglobin is found to accumulate in the kidney and is secreted in the urine. Haptoglobin captures, and combines with free plasma hemoglobin to allow hepatic recycling of heme iron and to prevent kidney damage. Haptoglobin also acts as an antioxidant, has antibacterial activity and plays a role in modulating many aspects of the acute phase response. Hemoglobin/haptoglobin complexes are rapidly cleared by the macrophage CD163 scavenger receptor expressed on the surface of liver Kupfer cells through an endocytic lysosomal degradation pathway. This chain is Haptoglobin (HP), found in Papio hamadryas (Hamadryas baboon).